We begin with the raw amino-acid sequence, 367 residues long: MSGSQTLVVKLGTSVLTGGSRRLNRAHIVELVRQCAQQHAAGHRIVIVTSGAIAAGREHLGYPELPATIATKQLLAAVGQSRLIQLWEQLFSIYGIHVGQMLLTRADMEDRERFLNARDTMRALLDNNIVPVINENDAVATAEIKVGDNDNLSALAAILADADKLLLLTDQAGLFTADPRNNPDAELIREVTGINDALRSIAGDSVSGLGTGGMSTKLQAADVACRAGIDVVIAAGSKPGVIGDVIADISVGTRFHALDTPLESRKHWIFGAPPAGEITVDDGALSAILERGSSLLPKGIRTVEGNFSRGEVIRVRSLAGRDVAHAVTRYNSDALRLIAGHHSQQIAEILGYEYGPVAIHRDDMIIN.

Lysine 10 serves as a coordination point for ATP. Substrate contacts are provided by serine 50, aspartate 137, and asparagine 149. ATP is bound by residues 169–170 (TD) and 211–217 (TGGMSTK). The PUA domain occupies 275-353 (AGEITVDDGA…QQIAEILGYE (79 aa)).

It belongs to the glutamate 5-kinase family.

It localises to the cytoplasm. The catalysed reaction is L-glutamate + ATP = L-glutamyl 5-phosphate + ADP. It functions in the pathway amino-acid biosynthesis; L-proline biosynthesis; L-glutamate 5-semialdehyde from L-glutamate: step 1/2. Functionally, catalyzes the transfer of a phosphate group to glutamate to form L-glutamate 5-phosphate. This is Glutamate 5-kinase from Pectobacterium atrosepticum (strain SCRI 1043 / ATCC BAA-672) (Erwinia carotovora subsp. atroseptica).